We begin with the raw amino-acid sequence, 429 residues long: Enolase (429 aa).

Gln162 contacts (2R)-2-phosphoglycerate. The Proton donor role is filled by Glu204. Residues Asp241, Glu286, and Asp313 each contribute to the Mg(2+) site. (2R)-2-phosphoglycerate contacts are provided by Lys338, Arg367, Ser368, and Lys389. Catalysis depends on Lys338, which acts as the Proton acceptor.

Belongs to the enolase family. Requires Mg(2+) as cofactor.

Its subcellular location is the cytoplasm. The protein localises to the secreted. It localises to the cell surface. The catalysed reaction is (2R)-2-phosphoglycerate = phosphoenolpyruvate + H2O. Its pathway is carbohydrate degradation; glycolysis; pyruvate from D-glyceraldehyde 3-phosphate: step 4/5. Functionally, catalyzes the reversible conversion of 2-phosphoglycerate (2-PG) into phosphoenolpyruvate (PEP). It is essential for the degradation of carbohydrates via glycolysis. This chain is Enolase, found in Halalkalibacterium halodurans (strain ATCC BAA-125 / DSM 18197 / FERM 7344 / JCM 9153 / C-125) (Bacillus halodurans).